The following is a 334-amino-acid chain: Type IV inositol polyphosphate 5-phosphatase 11 (334 aa).

Catalytic stretches follow at residues 206-222 and 282-297; these read DLTVWLGDLNYRIQDVS and KIRVPAWTDRILFKIQ.

It belongs to the inositol polyphosphate 5-phosphatase family. As to expression, expressed ubiquitously.

It is found in the cell membrane. The catalysed reaction is a 1,2-diacyl-sn-glycero-3-phospho-(1D-myo-inositol-4,5-bisphosphate) + H2O = a 1,2-diacyl-sn-glycero-3-phospho-(1D-myo-inositol 4-phosphate) + phosphate. It catalyses the reaction a 1,2-diacyl-sn-glycero-3-phospho-(1D-myo-inositol-3,4,5-trisphosphate) + H2O = a 1,2-diacyl-sn-glycero-3-phospho-(1D-myo-inositol-3,4-bisphosphate) + phosphate. Functionally, has phosphatase activity toward PtdIns(4,5)P2, and in vitro toward PtdIns(3,5)P2 and PtdIns(3,4,5)P3. Cannot dephosphorylate PtdIns(5)P, Ins(1,4,5)P3 and Ins(1,3,4,5)P4. The chain is Type IV inositol polyphosphate 5-phosphatase 11 from Arabidopsis thaliana (Mouse-ear cress).